A 254-amino-acid chain; its full sequence is 3-deoxy-manno-octulosonate cytidylyltransferase (254 aa).

It belongs to the KdsB family.

It localises to the cytoplasm. It carries out the reaction 3-deoxy-alpha-D-manno-oct-2-ulosonate + CTP = CMP-3-deoxy-beta-D-manno-octulosonate + diphosphate. It participates in nucleotide-sugar biosynthesis; CMP-3-deoxy-D-manno-octulosonate biosynthesis; CMP-3-deoxy-D-manno-octulosonate from 3-deoxy-D-manno-octulosonate and CTP: step 1/1. The protein operates within bacterial outer membrane biogenesis; lipopolysaccharide biosynthesis. Activates KDO (a required 8-carbon sugar) for incorporation into bacterial lipopolysaccharide in Gram-negative bacteria. The sequence is that of 3-deoxy-manno-octulosonate cytidylyltransferase from Haemophilus influenzae (strain ATCC 51907 / DSM 11121 / KW20 / Rd).